Consider the following 210-residue polypeptide: dTTP/UTP pyrophosphatase (210 aa).

Residues 1 to 15 (MTHGDNRDGPGRETR) are compositionally biased toward basic and acidic residues. Residues 1-22 (MTHGDNRDGPGRETRSSGPLVL) are disordered. The Proton acceptor role is filled by aspartate 86.

It belongs to the Maf family. YhdE subfamily. The cofactor is a divalent metal cation.

It is found in the cytoplasm. The enzyme catalyses dTTP + H2O = dTMP + diphosphate + H(+). It catalyses the reaction UTP + H2O = UMP + diphosphate + H(+). In terms of biological role, nucleoside triphosphate pyrophosphatase that hydrolyzes dTTP and UTP. May have a dual role in cell division arrest and in preventing the incorporation of modified nucleotides into cellular nucleic acids. The protein is dTTP/UTP pyrophosphatase of Rhodospirillum rubrum (strain ATCC 11170 / ATH 1.1.1 / DSM 467 / LMG 4362 / NCIMB 8255 / S1).